Here is a 141-residue protein sequence, read N- to C-terminus: Flagellar assembly factor FliW 1 (141 aa).

It belongs to the FliW family. As to quaternary structure, interacts with translational regulator CsrA and flagellin(s).

Its subcellular location is the cytoplasm. Its function is as follows. Acts as an anti-CsrA protein, binds CsrA and prevents it from repressing translation of its target genes, one of which is flagellin. Binds to flagellin and participates in the assembly of the flagellum. The protein is Flagellar assembly factor FliW 1 of Desulfotalea psychrophila (strain LSv54 / DSM 12343).